Reading from the N-terminus, the 572-residue chain is Capsid vertex component 2 (572 aa).

Residues methionine 1–arginine 58 form an interaction with major capsid protein/MCP region.

This sequence belongs to the herpesviridae CVC2 protein family. As to quaternary structure, heterodimerizes with CVC1. Interacts with major capsid protein/MCP and triplex capsid protein 1/TRX1 at the pentamer vertices. Interacts with the large tegument protein/LTP.

It is found in the virion. The protein resides in the host nucleus. Capsid vertex-specific component that plays a role during viral DNA encapsidation, assuring correct genome cleavage and presumably stabilizing capsids that contain full-length viral genomes. Participates in the interaction between the capsid and the tegument through interaction with the large tegument protein/LTP. This chain is Capsid vertex component 2, found in Infectious laryngotracheitis virus (strain Thorne V882) (ILTV).